The chain runs to 1185 residues: Pyruvate carboxylase (1185 aa).

Positions 32 to 484 (KFTKVLVANR…WTTFIDDTPE (453 aa)) constitute a Biotin carboxylation domain. 3 residues coordinate ATP: Lys-150, Glu-234, and His-269. An ATP-grasp domain is found at 154-351 (RAIAIRCGVP…IVSAQLHVAA (198 aa)). Residue Arg-326 is part of the active site. Residues 570–838 (GLIMDTTWRD…QLEFDNNQLR (269 aa)) form the Pyruvate carboxyltransferase domain. Substrate is bound by residues 578 to 582 (RDAHQ) and Arg-651. Asp-579 lines the a divalent metal cation pocket. Positions 747, 777, and 779 each coordinate a divalent metal cation. N6-carboxylysine is present on Lys-747. Thr-912 is a substrate binding site. The region spanning 1108 to 1183 (RADPGNPGHV…NGGDLCAVLE (76 aa)) is the Biotinyl-binding domain. An N6-biotinyllysine modification is found at Lys-1149.

Biotin serves as cofactor. Requires Zn(2+) as cofactor.

The protein localises to the cytoplasm. The catalysed reaction is hydrogencarbonate + pyruvate + ATP = oxaloacetate + ADP + phosphate + H(+). It participates in carbohydrate biosynthesis; gluconeogenesis. Its function is as follows. Pyruvate carboxylase catalyzes a 2-step reaction, involving the ATP-dependent carboxylation of the covalently attached biotin in the first step and the transfer of the carboxyl group to pyruvate in the second. This Schizosaccharomyces pombe (strain 972 / ATCC 24843) (Fission yeast) protein is Pyruvate carboxylase (pyr1).